The sequence spans 304 residues: Recombination-associated protein RdgC (304 aa).

Belongs to the RdgC family.

It is found in the cytoplasm. The protein localises to the nucleoid. In terms of biological role, may be involved in recombination. In Shewanella putrefaciens (strain CN-32 / ATCC BAA-453), this protein is Recombination-associated protein RdgC.